A 345-amino-acid polypeptide reads, in one-letter code: CCAAT/enhancer-binding protein beta (345 aa).

Residues 1–24 (MQRLVAWDPACLPLPPPPPAFKSM) are required for Lys-174 sumoylation. Arginine 3 is modified (asymmetric dimethylarginine; by CARM1). The tract at residues 24-135 (MEVANFYYEA…YGGKNCKKPA (112 aa)) is required for MYC transcriptional repression. Lysine 43 bears the N6-acetyllysine; alternate mark. Lysine 43 carries the N6-methylated lysine; alternate modification. Disordered stretches follow at residues 46 to 67 (PAAPPAARPGPRPPAGELGSIG) and 79 to 116 (LEPLGAPQAPAPATATDTFEAAPPAPAPAPASSGQHHD). Positions 47 to 59 (AAPPAARPGPRPP) are enriched in pro residues. Low complexity predominate over residues 84-100 (APQAPAPATATDTFEAA). The 9aaTAD signature appears at 116 to 124 (DFLSDLFSD). Residues lysine 129 and lysine 132 each carry the N6-acetyllysine; by KAT2A and KAT2B modification. Lysine 133 carries the N6-acetyllysine; by KAT2A and KAT2B; alternate modification. Lysine 133 is covalently cross-linked (Glycyl lysine isopeptide (Lys-Gly) (interchain with G-Cter in SUMO2); alternate). Positions 157–178 (FAPLHPPPPPPPPPAELKAEPG) are disordered. A compositionally biased stretch (pro residues) spans 160–171 (LHPPPPPPPPPA). Lysine 174 participates in a covalent cross-link: Glycyl lysine isopeptide (Lys-Gly) (interchain with G-Cter in SUMO2); alternate. Residue lysine 174 forms a Glycyl lysine isopeptide (Lys-Gly) (interchain with G-Cter in SUMO); alternate linkage. Residues lysine 185 and lysine 187 each participate in a glycyl lysine isopeptide (Lys-Gly) (interchain with G-Cter in SUMO2) cross-link. The span at 218–232 (SGSSGSLSTSSSSSP) shows a compositional bias: low complexity. The segment at 218 to 271 (SGSSGSLSTSSSSSPPGTPSPADAKAPPTACYAGAAPAPSQVKSKAKKTVDKHS) is disordered. The residue at position 226 (threonine 226) is a Phosphothreonine; by GSK3-beta. O-linked (GlcNAc) serine glycans are attached at residues serine 227 and serine 228. Residue serine 231 is modified to Phosphoserine; by GSK3-beta. Threonine 235 carries the phosphothreonine; by RPS6KA1, CDK2 and MAPK modification. Residues lysine 260 and lysine 262 each participate in a glycyl lysine isopeptide (Lys-Gly) (interchain with G-Cter in SUMO2) cross-link. At threonine 266 the chain carries Phosphothreonine; by RPS6KA1 and PKC/PRKCA. The bZIP domain occupies 271-334 (SDEYKIRRER…STLRNLFKQL (64 aa)). Residues 275 to 295 (KIRRERNNIAVRKSRDKAKMR) are basic motif. The residue at position 288 (serine 288) is a Phosphoserine; by PKC/PRKCA. Positions 297–304 (LETQHKVL) are leucine-zipper. Serine 325 is subject to Phosphoserine; by CaMK2. A Glycyl lysine isopeptide (Lys-Gly) (interchain with G-Cter in SUMO2) cross-link involves residue lysine 332.

Belongs to the bZIP family. C/EBP subfamily. As to quaternary structure, binds DNA as a homodimer and as a heterodimer. Interacts with ATF4. Binds DNA as a heterodimer with ATF4. Interacts with MYB; within the complex, MYB and CEBPB bind to different promoter regions. Can form stable heterodimers with CEBPD. Can form stable heterodimers with CEBPA and CEBPE. Interacts with SIX1. Isoform 2 and isoform 3 also form heterodimers. Interacts with TRIM28 and PTGES2. Interacts with PRDM16. Interacts with CCDC85B. Forms a complex with THOC5. Interacts with ZNF638; this interaction increases transcriptional activation. Interacts with CIDEA and CIDEC; these interactions increase transcriptional activation of a subset of CEBPB downstream target genes. Interacts with DDIT3/CHOP. Interacts with EP300; recruits EP300 to chromatin. Interacts with RORA; the interaction disrupts interaction with EP300. Interacts (not methylated) with MED23, MED26, SMARCA2, SMARCB1 and SMARCC1. Interacts with KAT2A and KAT2B. Interacts with ATF5; EP300 is required for ATF5 and CEBPB interaction and DNA binding. Interacts with NFE2L1; the heterodimer represses expression of DSPP during odontoblast differentiation. Methylated. Methylation at Arg-3 by CARM1 and at Lys-43 by EHMT2 inhibit transactivation activity. Methylation is probably inhibited by phosphorylation at Thr-235. In terms of processing, sumoylated by polymeric chains of SUMO2 or SUMO3. Sumoylation at Lys-174 is required for inhibition of T-cells proliferation. In adipocytes, sumoylation at Lys-174 by PIAS1 leads to ubiquitination and subsequent proteasomal degradation. Desumoylated by SENP2, which abolishes ubiquitination and stabilizes protein levels. Post-translationally, ubiquitinated, leading to proteasomal degradation. Phosphorylated at Thr-235 by MAPK and CDK2, serves to prime phosphorylation at Thr-226 and Ser-231 by GSK3B and acquire DNA-binding as well as transactivation activities, required to induce adipogenesis. MAPK and CDK2 act sequentially to maintain Thr-235 in the primed phosphorylated state during mitotical cloning expansion and thereby progression of terminal differentiation. Phosphorylation at Thr-266 enhances transactivation activity. Phosphorylation at Ser-325 in response to calcium increases transactivation activity. Phosphorylated at Thr-235 by RPS6KA1. In terms of processing, O-glycosylated, glycosylation at Ser-227 and Ser-228 prevents phosphorylation on Thr-235, Ser-231 and Thr-226 and DNA binding activity which delays the adipocyte differentiation program. Post-translationally, acetylated. Acetylation at Lys-43 is an important and dynamic regulatory event that contributes to its ability to transactivate target genes, including those associated with adipogenesis and adipocyte function. Deacetylation by HDAC1 represses its transactivation activity. Acetylated by KAT2A and KAT2B within a cluster of lysine residues between amino acids 129-133, this acetylation is strongly induced by glucocorticoid treatment and enhances transactivation activity. As to expression, expressed at low levels in the lung, kidney and spleen.

It is found in the nucleus. The protein resides in the cytoplasm. Functionally, important transcription factor regulating the expression of genes involved in immune and inflammatory responses. Also plays a significant role in adipogenesis, as well as in the gluconeogenic pathway, liver regeneration, and hematopoiesis. The consensus recognition site is 5'-T[TG]NNGNAA[TG]-3'. Its functional capacity is governed by protein interactions and post-translational protein modifications. During early embryogenesis, plays essential and redundant roles with CEBPA. Has a promitotic effect on many cell types such as hepatocytes and adipocytes but has an antiproliferative effect on T-cells by repressing MYC expression, facilitating differentiation along the T-helper 2 lineage. Binds to regulatory regions of several acute-phase and cytokines genes and plays a role in the regulation of acute-phase reaction and inflammation. Also plays a role in intracellular bacteria killing. During adipogenesis, is rapidly expressed and, after activation by phosphorylation, induces CEBPA and PPARG, which turn on the series of adipocyte genes that give rise to the adipocyte phenotype. The delayed transactivation of the CEBPA and PPARG genes by CEBPB appears necessary to allow mitotic clonal expansion and thereby progression of terminal differentiation. Essential for female reproduction because of a critical role in ovarian follicle development. Restricts osteoclastogenesis: together with NFE2L1; represses expression of DSPP during odontoblast differentiation. In terms of biological role, essential for gene expression induction in activated macrophages. Plays a major role in immune responses such as CD4(+) T-cell response, granuloma formation and endotoxin shock. Not essential for intracellular bacteria killing. Its function is as follows. Acts as a dominant negative through heterodimerization with isoform 2. Promotes osteoblast differentiation and osteoclastogenesis. In Homo sapiens (Human), this protein is CCAAT/enhancer-binding protein beta.